The chain runs to 77 residues: U8-lycotoxin-Ls1q (77 aa).

Residues Met-1–Ala-20 form the signal peptide. A propeptide spanning residues Gln-21–Lys-26 is cleaved from the precursor.

It belongs to the neurotoxin 19 (CSTX) family. 08 (U8-Lctx) subfamily. Post-translationally, contains 4 disulfide bonds. Expressed by the venom gland.

It is found in the secreted. The chain is U8-lycotoxin-Ls1q from Lycosa singoriensis (Wolf spider).